The primary structure comprises 88 residues: Large ribosomal subunit protein bL27 (88 aa).

The segment at 1-24 (MAHKKGTGSTRNGRDSNSKRLGVK) is disordered.

Belongs to the bacterial ribosomal protein bL27 family.

The polypeptide is Large ribosomal subunit protein bL27 (Synechococcus sp. (strain CC9311)).